A 460-amino-acid chain; its full sequence is V-type ATP synthase beta chain (460 aa).

Belongs to the ATPase alpha/beta chains family.

Produces ATP from ADP in the presence of a proton gradient across the membrane. The V-type beta chain is a regulatory subunit. In Anaeromyxobacter sp. (strain Fw109-5), this protein is V-type ATP synthase beta chain.